The chain runs to 429 residues: Adenylosuccinate synthetase (429 aa).

GTP is bound by residues Gly-13–Lys-19 and Gly-41–Thr-43. Catalysis depends on Asp-14, which acts as the Proton acceptor. The Mg(2+) site is built by Asp-14 and Gly-41. IMP contacts are provided by residues Asp-14–Lys-17, Asn-39–His-42, Thr-130, Arg-144, Gln-225, Thr-240, and Arg-304. The active-site Proton donor is the His-42. Ala-300–Arg-306 serves as a coordination point for substrate. GTP is bound by residues Arg-306, Lys-332 to Asp-334, and Ser-414 to Gly-416.

This sequence belongs to the adenylosuccinate synthetase family. Homodimer. Mg(2+) serves as cofactor.

The protein localises to the cytoplasm. The catalysed reaction is IMP + L-aspartate + GTP = N(6)-(1,2-dicarboxyethyl)-AMP + GDP + phosphate + 2 H(+). Its pathway is purine metabolism; AMP biosynthesis via de novo pathway; AMP from IMP: step 1/2. In terms of biological role, plays an important role in the de novo pathway of purine nucleotide biosynthesis. Catalyzes the first committed step in the biosynthesis of AMP from IMP. This Acidithiobacillus ferrooxidans (Thiobacillus ferrooxidans) protein is Adenylosuccinate synthetase.